A 1828-amino-acid polypeptide reads, in one-letter code: MPENPAPDKLQVLQVLDRLKMKLQEKGDTSQNEKLSLFYETLQSPLFNQILTLQQSIKQLKGQLSHIPSDCSTNFDFSRKGLLVFTDSAITNGNAQRPSNNLTVSGLFPWTPKSGNEDFNSVIQQMAQGRQIEYIDIERPSTGGLGFSVVALRSQNLGEVDIFVKEVQPGSIADRDQRLRENDQILAINHTPLDQNISHQQAIALLQQTTGSLHLVVAREPVHTKSRTSINLTDTTMPETVHWGHIEDVELINDGSGLGFGIVGGKSSGVVVRTIVPGGLADRDGRLQTGDHILKIGDTDVQGMTSEQVAQVLRNCGNSVRMLVARDPVGETSVTPPTPAALPVALPAVANRSPSTDSSLYETYGVELIKKDGQSLGIRIVGYIGTAHTGEASGIYVKSIIPGSAAYHNGQIQVNDKIVAVDGVNIQGFTNQDVVEVLRNAGQVVHLTLVRRKMCSSTSPLERSSDRGTVVEPSGTPARYVTGAVETETNLDGGDEETEERMDNLKNDNIQALEKLERVPDSPENELKSRWENLLGPDYEVMVATLDTQIADDAELQKYSKLLPIHTLRLGMEVDSFDGHHYISSIAPGGPVDALNLLQPEDELLEVNGVQLYGKSRREAVSFLKEVPPPFTLVCCRRLFDDEASVDEPRTTETLLPEMEADHNVDINTEEEEEEELALWSPEVKIVELVKDHKGLGFSILDYQDPLDPTRSVIVIRSLVANGVAEKGGELLPGDRLVSVNEYCLENTTLAEAVEVLKAVPPGIVHLGVCKPLVDNDKEEESHYILHSNNNEDETELSETIHDINSSLILEAPKGFRDEPYYKEELVDEPFLDLGKAFQSQQKEIDNSKEAWEMQEFLPPRLQEMGEEREMLVDEECDLYQDHFQSMDLYPSSHLQEAAPVSSVKELHFGTQWLHDSEPPELQEARSMMNMYSQETQQYGYSTENMIKENFGIDSLPSISSSEGNSQQGRFDDLENLNSLTKSSLDLGMMIPNDVQGPGMLVELPAVAQRREQEDLPLYQLPRTRVVSKASAYTGASSSRYTAGACELPEREEGEGEETPNFSHWGPPRIVEIFREPNVSLGISIVGGQTVIKRLKNGEELKGIFIKQVLEDSPAGKTNALKTGDKILEVSGVDLQNASHREAVEAIKNAGNPVVFVVQSLSSTPRVIPSVHNKANKIANNQDQNTEEKKEKRQGTPPPPMKLPPPYKAPSDDSDENEEEYAFTNKKIRQRYADLPGELHIIELEKDKNGLGLSLAGNKDRSRMSIFVVGINPEGPAATDGRMRIGDELLEINNQILYGRSHQNASAVIKTAPSKVKLVFIRNEDAVNQMAVAPFPVPSSSPSSLEDQSGTEPVSSEEDGSLEVGIKQLPENESSKLEDISQVAGQGMVAGQQKALDCPTDNAVSQMKPQKYSTKVSFSSQEIPLAPAPSYHSTDVDFTSYGGFQAPLSVDPATCPIVPGQEMIIEISKGRSGLGLSIVGGRDTPLDAIVIHEVYEEGAAARDGRLWAGDQILEVNGIDLRSASHEEAITALRQTPQKVRLVVYRDEAHYRDEENLEIFPVDLQKKAGRGLGLSIVGKRNGSGVFISDIVKGGAADLDRRLIQGDQILSVNGEDMRNASQETVATVLKCAQGLVQLEIGRLRAGSWTSSRKTSQNSQGSQHSTHSSFHPSLAPVITSLQNLVGTKRATDPSLKSSGMDMGPRTVEIIRELSDALGISIAGGKGSPLGDIPIFIAMIQASGVAARTQKLKVGDRIVSINGQPLDGLSHADVVNLLKNAYGRIILQVVADTNISAIATQLENMSTGYHLGSPTAEHHPEDTEEPLQMTAG.

The L27 domain maps to 5–65; the sequence is PAPDKLQVLQ…SIKQLKGQLS (61 aa). 3 PDZ domains span residues 134–221, 248–328, and 365–453; these read YIDI…AREP, DVEL…ARDP, and GVEL…VRRK. Residues Ser459 and Ser522 each carry the phosphoserine modification. Residues 553-639 form the PDZ 4 domain; the sequence is DAELQKYSKL…PFTLVCCRRL (87 aa). Position 645 is a phosphoserine (Ser645). PDZ domains are found at residues 686 to 758 and 1070 to 1162; these read IVEL…EVLK and IVEI…QSLS. The disordered stretch occupies residues 1168-1220; that stretch reads IPSVHNKANKIANNQDQNTEEKKEKRQGTPPPPMKLPPPYKAPSDDSDENEEE. Residues 1196 to 1208 are compositionally biased toward pro residues; sequence TPPPPMKLPPPYK. Ser1211 is subject to Phosphoserine. In terms of domain architecture, PDZ 7 spans 1241 to 1324; the sequence is IIELEKDKNG…KVKLVFIRNE (84 aa). The segment at 1333–1362 is disordered; sequence APFPVPSSSPSSLEDQSGTEPVSSEEDGSL. Positions 1345 to 1354 are enriched in polar residues; it reads LEDQSGTEPV. 2 PDZ domains span residues 1464 to 1547 and 1560 to 1642; these read IIEI…YRDE and PVDL…GRLR. At Thr1535 the chain carries Phosphothreonine. Residues 1645-1668 show a composition bias toward polar residues; sequence SWTSSRKTSQNSQGSQHSTHSSFH. The tract at residues 1645 to 1669 is disordered; it reads SWTSSRKTSQNSQGSQHSTHSSFHP. One can recognise a PDZ 10 domain in the interval 1703 to 1789; the sequence is TVEIIRELSD…RIILQVVADT (87 aa). The tract at residues 1805–1828 is disordered; the sequence is YHLGSPTAEHHPEDTEEPLQMTAG.

As to quaternary structure, forms a ternary complex with PALS1 and CRB1. Component of a complex whose core is composed of ARHGAP17, AMOT, PALS1, INADL/PATJ and PARD3/PAR3. Forms a heterotrimeric complex composed of MMP5, LIN7B and PATJ; the N-terminal L27 domain of PALS1 interacts with the L27 domain of PATJ and the C-terminal L27 domain of PALS1 interacts with the L27 domain of LIN7B. Component of a complex composed of CRB3, PALS1 and PATJ. As part of the Crumbs complex; interacts with WWP1, the interaction is enhanced by AMOTL2 and facilitates WWP1 localization to the plasma membrane. The Crumbs complex promotes monoubiquitination of AMOTL2 by WWP1, which activates the Hippo signaling pathway. Interacts (via N-terminus) with PALS1/PALS (via PDZ domain). Interacts with TJP3/ZO-3 and CLDN1/claudin-1. Interacts with ASIC3, KCNJ10, KCNJ15, GRIN2A, GRIN2B, GRIN2C, GRIN2D, NLGN2, and HTR2A. Interacts with MPP7. Directly interacts with HTR4. Interacts (via PDZ domain 8) with WWC1 (via the ADDV motif). Interacts with SLC6A4. Interacts (via C-terminus) with ARHGEF18. Interacts with NPHP1. Interacts with PARD3/PAR3. Interacts (via PDZ1-6 domains) with TJP1/ZO1; the interaction is required for attachment and extension of TJP1/ZO1 condensates along the apical cell interface.

Its subcellular location is the cell junction. It localises to the tight junction. The protein resides in the apical cell membrane. It is found in the cytoplasm. The protein localises to the perinuclear region. In terms of biological role, scaffolding protein that facilitates the localization of proteins to the cell membrane. Required for the correct formation of tight junctions and epithelial apico-basal polarity. Acts (via its L27 domain) as an apical connector and elongation factor for multistranded TJP1/ZO1 condensates that form a tight junction belt, thereby required for the formation of the tight junction-mediated cell barrier. Positively regulates epithelial cell microtubule elongation and cell migration, possibly via facilitating localization of PRKCI/aPKC and PAR3D/PAR3 at the leading edge of migrating cells. Plays a role in the correct reorientation of the microtubule-organizing center during epithelial migration. May regulate the surface expression and/or function of ASIC3 in sensory neurons. May recruit ARHGEF18 to apical cell-cell boundaries. This Canis lupus familiaris (Dog) protein is InaD-like protein.